Reading from the N-terminus, the 377-residue chain is 5-hydroxytryptamine receptor 1D (377 aa).

The segment at 1 to 23 (MSPLNQSAEGLPQEASNRSLNAT) is disordered. At 1–38 (MSPLNQSAEGLPQEASNRSLNATETSEAWDPRTLQALK) the chain is on the extracellular side. Asn5, Asn17, and Asn21 each carry an N-linked (GlcNAc...) asparagine glycan. The chain crosses the membrane as a helical span at residues 39 to 64 (ISLAVVLSVITLATVLSNAFVLTTIL). Residues 65–75 (LTRKLHTPANY) lie on the Cytoplasmic side of the membrane. The chain crosses the membrane as a helical span at residues 76-97 (LIGSLATTDLLVSILVMPISIA). Topologically, residues 98–109 (YTITHTWNFGQI) are extracellular. The helical transmembrane segment at 110-134 (LCDIWLSSDITCCTASILHLCVIAL) threads the bilayer. Cys111 and Cys188 are joined by a disulfide. Serotonin-binding residues include Asp118 and Cys122. The short motif at 135-137 (DRY) is the DRY motif; important for ligand-induced conformation changes element. At 135 to 154 (DRYWAITDALEYSKRRTAGH) the chain is on the cytoplasmic side. Residues 155–176 (AATMIAIVWAISICISIPPLFW) traverse the membrane as a helical segment. Residues 177 to 194 (RQAKAQEEMSDCLVNTSQ) lie on the Extracellular side of the membrane. A helical transmembrane segment spans residues 195 to 218 (ISYTIYSTCGAFYIPSVLLIILYG). Over 219-300 (RIYRAARNRI…ISAARERKAT (82 aa)) the chain is Cytoplasmic. The chain crosses the membrane as a helical span at residues 301-326 (KILGIILGAFIICWLPFFVVSLVLPI). Ser321 contacts serotonin. The Extracellular portion of the chain corresponds to 327 to 335 (CRDSCWIHP). The chain crosses the membrane as a helical span at residues 336–359 (ALFDFFTWLGYLNSLINPIIYTVF). Positions 352–356 (NPIIY) match the NPxxY motif; important for ligand-induced conformation changes and signaling motif. The Cytoplasmic portion of the chain corresponds to 360 to 377 (NEEFRQAFQKIVPFRKAS).

It belongs to the G-protein coupled receptor 1 family. Homodimer. Heterodimer with HTR1B. Detected in brain neocortex and caudate nucleus (at protein level).

Its subcellular location is the cell membrane. Functionally, G-protein coupled receptor for 5-hydroxytryptamine (serotonin). Also functions as a receptor for ergot alkaloid derivatives, various anxiolytic and antidepressant drugs and other psychoactive substances. Ligand binding causes a conformation change that triggers signaling via guanine nucleotide-binding proteins (G proteins) and modulates the activity of downstream effectors, such as adenylate cyclase. HTR1D is coupled to G(i)/G(o) G alpha proteins and mediates inhibitory neurotransmission by inhibiting adenylate cyclase activity. Regulates the release of 5-hydroxytryptamine in the brain, and thereby affects neural activity. May also play a role in regulating the release of other neurotransmitters. May play a role in vasoconstriction. The sequence is that of 5-hydroxytryptamine receptor 1D from Homo sapiens (Human).